The chain runs to 178 residues: Long polar fimbria protein A (178 aa).

A signal peptide spans 1–24; sequence MEFLMKKVVFALSALAVVSTSAFA.

It belongs to the fimbrial protein family.

It localises to the fimbrium. The protein is Long polar fimbria protein A (lpfA) of Salmonella typhimurium (strain LT2 / SGSC1412 / ATCC 700720).